The following is a 684-amino-acid chain: Calpain-14 (684 aa).

The Calpain catalytic domain occupies L43–T336. Active-site residues include C101, H254, and N278. The tract at residues P337 to N503 is domain III. The interval S504 to E517 is linker. The tract at residues R518–Y683 is domain IV. 3 consecutive EF-hand domains span residues F557 to S592, W586 to M621, and L651 to S684. Residues D570, N572, S574, T576, and E581 each coordinate Ca(2+).

This sequence belongs to the peptidase C2 family. As to expression, not expressed in tissues tested.

Calcium-regulated non-lysosomal thiol-protease. The sequence is that of Calpain-14 (CAPN14) from Homo sapiens (Human).